The following is a 427-amino-acid chain: Glutamate-1-semialdehyde 2,1-aminomutase (427 aa).

Position 267 is an N6-(pyridoxal phosphate)lysine (K267).

This sequence belongs to the class-III pyridoxal-phosphate-dependent aminotransferase family. HemL subfamily. Homodimer. Requires pyridoxal 5'-phosphate as cofactor.

The protein localises to the cytoplasm. The catalysed reaction is (S)-4-amino-5-oxopentanoate = 5-aminolevulinate. The protein operates within porphyrin-containing compound metabolism; protoporphyrin-IX biosynthesis; 5-aminolevulinate from L-glutamyl-tRNA(Glu): step 2/2. The sequence is that of Glutamate-1-semialdehyde 2,1-aminomutase from Syntrophotalea carbinolica (strain DSM 2380 / NBRC 103641 / GraBd1) (Pelobacter carbinolicus).